A 239-amino-acid chain; its full sequence is UPF0173 metal-dependent hydrolase Msm_0779 (239 aa).

This sequence belongs to the UPF0173 family.

This Methanobrevibacter smithii (strain ATCC 35061 / DSM 861 / OCM 144 / PS) protein is UPF0173 metal-dependent hydrolase Msm_0779.